The primary structure comprises 717 residues: SUN domain-containing protein 2 (717 aa).

Positions 1–66 (MSRRSQRLTR…PQLGPSSDAH (66 aa)) are disordered. The tract at residues 1-139 (MSRRSQRLTR…SSSGYSSEDD (139 aa)) is LMNA-binding. At 1 to 212 (MSRRSQRLTR…LTRRFSSLKT (212 aa)) the chain is on the nuclear side. S12 is subject to Phosphoserine. Residues 19-32 (SSSSGGSSVAGSQS) are compositionally biased toward low complexity. A phosphoserine mark is found at S38 and S54. Phosphothreonine is present on T107. Phosphoserine is present on residues S110, S113, S116, and S136. The helical transmembrane segment at 213–233 (FLWFLLPLLLLTCLTYGAWYF) threads the bilayer. Topologically, residues 234–717 (YPYGLQTFHP…RFRVHGEPAH (484 aa)) are perinuclear space. 3 coiled-coil regions span residues 273–296 (EQRV…EFSS), 348–440 (RRET…EEVG), and 475–506 (LLQR…SARE). The segment at 507–717 (AAASLSLTLQ…RFRVHGEPAH (211 aa)) is sufficient for interaction with SYNE1 and SYNE2. Residues 555–716 (GASVISTRCS…YRFRVHGEPA (162 aa)) enclose the SUN domain. An intrachain disulfide couples C601 to C705. A glycan (N-linked (GlcNAc...) asparagine) is linked at N636.

In terms of assembly, core component of the LINC complex which is composed of inner nuclear membrane SUN domain-containing proteins coupled to outer nuclear membrane KASH domain-containing nesprins. SUN and KASH domain-containing proteins seem to bind each other promiscuously; however, differentially expression of LINC complex constituents is giving rise to specific assemblies. At least SUN1/2-containing core LINC complexes are proposed to be hexameric composed of three protomers of each KASH and SUN domain-containing protein. Interacts with SYNE2; the SUN2:SYNE2/KASH2 LINC complex is a heterohexamer; the homotrimeric cloverleave-like conformation of the SUN domain is a prerequisite for LINC complex formation in which three separate SYNE2/KASH2 peptides bind at the interface of adjacent SUN domains. Component of a probable SUN2:KASH5 LINC complex. Interacts with SYNE1 and SYNE3; probably forming respective LINC complexes. Interacts with A-type lamin. Interaction with lamins B1 and C is hardly detectable. Interacts with EMD and RAB5A. Interacts with TMEM43. Interacts with TMEM201. In terms of processing, the disulfide bond with SYNE2 is required for stability of the SUN2:SYNE2/KASH2 LINC complex under tensile forces though not required for the interaction. The disulfide bond is proposed to be conserved in LINC complexes involved in force transmission. In terms of tissue distribution, widely expressed. Highly expressed in heart, lung and muscle. Weakly expressed in fetal heart. Slightly overexpressed in some heart tissues form patients with congenital heart defects.

The protein resides in the nucleus inner membrane. The protein localises to the nucleus envelope. It is found in the endosome membrane. Its function is as follows. As a component of the LINC (LInker of Nucleoskeleton and Cytoskeleton) complex, involved in the connection between the nuclear lamina and the cytoskeleton. The nucleocytoplasmic interactions established by the LINC complex play an important role in the transmission of mechanical forces across the nuclear envelope and in nuclear movement and positioning. Specifically, SYNE2 and SUN2 assemble in arrays of transmembrane actin-associated nuclear (TAN) lines which are bound to F-actin cables and couple the nucleus to retrograde actin flow during actin-dependent nuclear movement. Required for interkinetic nuclear migration (INM) and essential for nucleokinesis and centrosome-nucleus coupling during radial neuronal migration in the cerebral cortex and during glial migration. Required for nuclear migration in retinal photoreceptor progenitors implicating association with cytoplasmic dynein-dynactin and kinesin motor complexes, and probably B-type lamins; SUN1 and SUN2 seem to act redundantly. The SUN1/2:KASH5 LINC complex couples telomeres to microtubules during meiosis; SUN1 and SUN2 seem to act at least partial redundantly. Anchors chromosome movement in the prophase of meiosis and is involved in selective gene expression of coding and non-coding RNAs needed for gametogenesis. Required for telomere attachment to nuclear envelope and gametogenesis. May also function on endocytic vesicles as a receptor for RAB5-GDP and participate in the activation of RAB5. This is SUN domain-containing protein 2 from Homo sapiens (Human).